The primary structure comprises 123 residues: Large ribosomal subunit protein bL12 (123 aa).

Belongs to the bacterial ribosomal protein bL12 family. In terms of assembly, homodimer. Part of the ribosomal stalk of the 50S ribosomal subunit. Forms a multimeric L10(L12)X complex, where L10 forms an elongated spine to which 2 to 4 L12 dimers bind in a sequential fashion. Binds GTP-bound translation factors.

Functionally, forms part of the ribosomal stalk which helps the ribosome interact with GTP-bound translation factors. Is thus essential for accurate translation. The chain is Large ribosomal subunit protein bL12 from Neisseria perflava.